The primary structure comprises 1782 residues: Signal-induced proliferation-associated 1-like protein 1 (1782 aa).

Disordered regions lie at residues Met1 to Lys28, Gly47 to Asn125, and Lys140 to Arg171. The segment covering Pro84–Ser94 has biased composition (basic and acidic residues). A compositionally biased stretch (low complexity) spans Arg95–Asn125. Phosphoserine occurs at positions 162, 187, 193, 208, 255, and 288. The interval Glu277 to Arg297 is disordered. The region spanning Leu599–Leu816 is the Rap-GAP domain. The region spanning Glu953–Cys1031 is the PDZ domain. 2 disordered regions span residues Gln1069 to Pro1128 and Ser1144 to Asp1213. A phosphoserine mark is found at Ser1078, Ser1087, Ser1116, Ser1127, Ser1149, Ser1170, and Ser1181. Over residues Gln1080 to Leu1093 the composition is skewed to polar residues. The span at Ser1149–Thr1159 shows a compositional bias: low complexity. Over residues Asp1186–Gln1205 the composition is skewed to polar residues. Phosphoserine is present on residues Ser1234 and Ser1249. Residues His1247–Gly1285 form a disordered region. Low complexity predominate over residues Ser1261–Ala1276. Position 1305 is a phosphoserine; by PLK2 (Ser1305). The segment at Ile1307–Trp1342 is disordered. Thr1309 is subject to Phosphothreonine; by PLK2. The span at Ser1315 to Ser1328 shows a compositional bias: low complexity. The residue at position 1328 (Ser1328) is a Phosphoserine; by CDK5. At Ser1345 the chain carries Phosphoserine. Over residues Thr1358–Glu1368 the composition is skewed to basic and acidic residues. The segment at Thr1358 to Pro1454 is disordered. Phosphoserine occurs at positions 1369, 1370, 1391, 1410, and 1412. The segment covering Lys1378 to Ser1410 has biased composition (polar residues). Positions Ser1432–Ser1447 are enriched in low complexity. Ser1507 and Ser1528 each carry phosphoserine. The residue at position 1530 (Thr1530) is a Phosphothreonine. Phosphoserine occurs at positions 1533, 1544, 1547, 1564, and 1567. Asymmetric dimethylarginine is present on Arg1580. Phosphoserine is present on residues Ser1582, Ser1624, Ser1626, Ser1629, Ser1687, Ser1690, Ser1707, Ser1708, and Ser1712. The segment at Ala1625–Met1647 is disordered. The stretch at Pro1713–Glu1773 forms a coiled coil.

In terms of assembly, interacts with DLG4, PDLIM5, PDLIM7 and LZTS3. Interacts with the actin cytoskeleton. Interacts (via PDZ domain) with EPHA4 (via PDZ motif); controls neuronal morphology through regulation of the RAP1 (RAP1A or RAP1B) and RAP2 (RAP2A, RAP2B or RAP2C) GTPases. Ubiquitinated and degraded by the SCF(BTRC) following phosphorylation by PLK2. In terms of processing, phosphorylated at Ser-1328 by CDK5, creating a docking site for the POLO box domains of PLK2. Subsequently, PLK2 binds and phosphorylates SIPA1L1, leading to ubiquitination and degradation by the proteasome.

It localises to the cytoplasm. The protein localises to the cytoskeleton. The protein resides in the postsynaptic density. Its subcellular location is the synapse. It is found in the synaptosome. Functionally, stimulates the GTPase activity of RAP2A. Promotes reorganization of the actin cytoskeleton and recruits DLG4 to F-actin. Contributes to the regulation of dendritic spine morphogenesis. The protein is Signal-induced proliferation-associated 1-like protein 1 (Sipa1l1) of Mus musculus (Mouse).